The sequence spans 352 residues: tRNA pseudouridine synthase D (352 aa).

Asp81 functions as the Nucleophile in the catalytic mechanism. The region spanning 157–303 (GVPNYFGAQR…MDHERRILRL (147 aa)) is the TRUD domain.

This sequence belongs to the pseudouridine synthase TruD family.

It catalyses the reaction uridine(13) in tRNA = pseudouridine(13) in tRNA. Responsible for synthesis of pseudouridine from uracil-13 in transfer RNAs. The sequence is that of tRNA pseudouridine synthase D from Pseudomonas entomophila (strain L48).